The chain runs to 234 residues: Purine nucleoside phosphorylase DeoD-type (234 aa).

H5 contributes to the a purine D-ribonucleoside binding site. Residues G21, R25, R44, and 88 to 91 (RIGT) each bind phosphate. Residues 180 to 182 (DME) and 204 to 205 (SD) contribute to the a purine D-ribonucleoside site. D205 acts as the Proton donor in catalysis.

The protein belongs to the PNP/UDP phosphorylase family. In terms of assembly, homohexamer; trimer of homodimers.

The catalysed reaction is a purine D-ribonucleoside + phosphate = a purine nucleobase + alpha-D-ribose 1-phosphate. It catalyses the reaction a purine 2'-deoxy-D-ribonucleoside + phosphate = a purine nucleobase + 2-deoxy-alpha-D-ribose 1-phosphate. In terms of biological role, catalyzes the reversible phosphorolytic breakdown of the N-glycosidic bond in the beta-(deoxy)ribonucleoside molecules, with the formation of the corresponding free purine bases and pentose-1-phosphate. This chain is Purine nucleoside phosphorylase DeoD-type, found in Buchnera aphidicola subsp. Acyrthosiphon pisum (strain 5A).